The chain runs to 195 residues: Granulocyte colony-stimulating factor (195 aa).

An N-terminal signal peptide occupies residues 1-21 (MKLMVLQLLLWHSALWTVHEA). Intrachain disulfides connect Cys-57-Cys-63 and Cys-85-Cys-95. A glycan (O-linked (GalNAc...) threonine) is linked at Thr-154.

Belongs to the IL-6 superfamily. Monomer. O-glycosylated.

The protein resides in the secreted. Functionally, granulocyte/macrophage colony-stimulating factors are cytokines that act in hematopoiesis by controlling the production, differentiation, and function of 2 related white cell populations of the blood, the granulocytes and the monocytes-macrophages. This CSF induces granulocytes. In Bos taurus (Bovine), this protein is Granulocyte colony-stimulating factor (CSF3).